A 201-amino-acid chain; its full sequence is ADP-ribosylation factor-related protein 1 (201 aa).

Residue methionine 1 is modified to N-acetylmethionine. Residues 24–31 (GLDNAGKT), 75–79 (DLGGQ), and 134–137 (NKQD) contribute to the GTP site.

Belongs to the small GTPase superfamily. Arf family. In terms of assembly, interacts with SYS1.

It localises to the golgi apparatus. It is found in the trans-Golgi network. In terms of biological role, trans-Golgi-associated GTPase that regulates protein sorting. Controls the targeting of ARL1 and its effector to the trans-Golgi. Required for the lipidation of chylomicrons in the intestine and required for VLDL lipidation in the liver. The polypeptide is ADP-ribosylation factor-related protein 1 (ARFRP1) (Bos taurus (Bovine)).